Here is a 170-residue protein sequence, read N- to C-terminus: Opacity-related protein POPM3 (170 aa).

The protein belongs to the opacity porin family.

It is found in the cell outer membrane. In Neisseria meningitidis serogroup C, this protein is Opacity-related protein POPM3 (opr).